The primary structure comprises 851 residues: Protein BCK2 (851 aa).

Residues 1 to 10 (MPKNSHHHRS) show a composition bias toward basic residues. Disordered stretches follow at residues 1-91 (MPKN…RKKS), 233-271 (EVVP…MNTK), 315-355 (SLSL…LPEE), 466-504 (FLDG…YITT), and 698-722 (HASR…PNNV). Low complexity predominate over residues 11-23 (SSVNSTKSRSTES). Positions 37–66 (ASGSTQASPDRNSSTGSCSTPVLPTMNVMS) are enriched in polar residues. Residues 71–81 (VLLEDPRDNHT) show a composition bias toward basic and acidic residues. 4 stretches are compositionally biased toward polar residues: residues 254-271 (SETN…MNTK), 334-349 (SPRT…SQSK), 489-504 (ISDA…YITT), and 702-722 (SESN…PNNV). A Phosphoserine modification is found at serine 334. Serine 757 and serine 761 each carry phosphoserine.

Functionally, dosage dependent suppressor of PKC1 deletion and MPK1 deletion. Involved in cell lysis. In Saccharomyces cerevisiae (strain ATCC 204508 / S288c) (Baker's yeast), this protein is Protein BCK2 (BCK2).